Consider the following 460-residue polypeptide: Tubby-related protein 3 (460 aa).

2 disordered regions span residues Lys37–Pro132 and Tyr151–Ala193. Positions Tyr151 to Gly162 are enriched in acidic residues. Low complexity predominate over residues Ser166–Ala188.

It belongs to the TUB family. In terms of assembly, associates with the IFT complex A (IFT-A). Interacts with SIRT1. As to expression, widely expressed including eyes and adipose depots.

The protein localises to the nucleus. The protein resides in the cell membrane. Its subcellular location is the cell projection. It is found in the cilium. It localises to the cytoplasm. The protein localises to the secreted. Negative regulator of the Shh signaling transduction pathway: recruited to primary cilia via association with the IFT complex A (IFT-A) and is required for recruitment of G protein-coupled receptor GPR161 to cilia, a promoter of PKA-dependent basal repression machinery in Shh signaling. Binds to phosphorylated inositide (phosphoinositide) lipids. Both IFT-A- and phosphoinositide-binding properties are required to regulate ciliary G protein-coupled receptor trafficking. During adipogenesis, regulates ciliary trafficking of FFAR4 in preadipocytes. The chain is Tubby-related protein 3 from Mus musculus (Mouse).